Here is a 524-residue protein sequence, read N- to C-terminus: Tissue-resident T-cell transcription regulator protein ZNF683 (524 aa).

Basic and acidic residues predominate over residues 130-142 (NKDKLGKQPERAG). Disordered stretches follow at residues 130–166 (NKDK…NRKS) and 265–303 (QALP…LSSQ). 2 consecutive C2H2-type zinc fingers follow at residues 322 to 344 (YECN…LRVH) and 350 to 372 (FQCA…HLVH). The segment at 398–420 (REREVCHKRFSSSSNLKTHLRLH) adopts a C2H2-type 3; degenerate zinc-finger fold. A C2H2-type 4 zinc finger spans residues 426–448 (FQCSVCRSRFTQHIHLKLHHRLH).

It belongs to the krueppel C2H2-type zinc-finger protein family. Expressed in terminally differentiated effector CD8(+) T-cells, but not in naive and central memory cells. Expressed in terminally differentiated natural killer (NK) cells and natural killer (NKT) T-cells (at protein level). Expressed strongly in effector-type CD8(+) T-cells and weakly in naive and memory CD8(+) T-cells. Expressed in terminally differentiated natural killer (NK) cells. Isoform 2 is strongly expressed in effector CD8(+) T and natural killer (NK) cells. Isoform 1 is expressed in effector CD8(+) T and natural killer (NK) cells. In terms of tissue distribution, (Microbial infection) Expressed in cytomegalovirus (CMV)-infected effector CD8(+) T-cells (at protein level).

It is found in the nucleus. Functionally, transcription factor that mediates a transcriptional program in various innate and adaptive immune tissue-resident lymphocyte T-cell types such as tissue-resident memory T (Trm), natural killer (trNK) and natural killer T (NKT) cells and negatively regulates gene expression of proteins that promote the egress of tissue-resident T-cell populations from non-lymphoid organs. Plays a role in the development, retention and long-term establishment of adaptive and innate tissue-resident lymphocyte T cell types in non-lymphoid organs, such as the skin and gut, but also in other nonbarrier tissues like liver and kidney, and therefore may provide immediate immunological protection against reactivating infections or viral reinfection. Also plays a role in the differentiation of both thymic and peripheral NKT cells. Negatively regulates the accumulation of interferon-gamma (IFN-gamma) in NKT cells at steady state or after antigenic stimulation. Positively regulates granzyme B production in NKT cells after innate stimulation. Associates with the transcriptional repressor PRDM1/BLIMP1 to chromatin at gene promoter regions. In terms of biological role, lacks transcriptional repressor activity. Binds to DNA within promoter regions of the transcriptional repressor PRDM1/BLIMP1 target sites. Unable to regulate interferon-gamma (IFN-gamma) production in cytomegalovirus (CMV)-infected effector CD8(+) T-cells. Its function is as follows. Transcriptional repressor that binds to DNA within promoter regions of the transcriptional repressor PRDM1/BLIMP1 target sites. Regulates interferon-gamma (IFN-gamma) production in cytomegalovirus (CMV)-infected effector CD8(+) T cells. In Homo sapiens (Human), this protein is Tissue-resident T-cell transcription regulator protein ZNF683.